We begin with the raw amino-acid sequence, 287 residues long: MTDSTLHLLKAFFLGIVEGLTEFIPVSSTGHLIVIGDWINFASSSGKVFEVVIQFGSILAVMWIFRARLWQLIRGTLTGVRQEVNFTRNLLLAFLPAAVIGAIFIKSIKQVFYHPGVVAVTLVVGGFIMLWVERRAPHTPGDAPGAADDTASDERATAHTLEQISAKQALGVGVAQCVAMIPGVSRSGATIIGGMIAGIQRKTATEFSFFLAMPTMLGAAVYDLYRNIGLLSQHDMSAIAVGFVAAFLSALVVVRAVLRFVANHTYRVFAWYRIALGLVVAAWIYAK.

7 consecutive transmembrane segments (helical) span residues 6–26 (LHLL…FIPV), 45–65 (SGKV…MWIF), 89–109 (NLLL…KSIK), 111–131 (VFYH…IMLW), 204–224 (ATEF…VYDL), 238–258 (AIAV…RAVL), and 266–286 (YRVF…WIYA).

The protein belongs to the UppP family.

The protein resides in the cell inner membrane. It catalyses the reaction di-trans,octa-cis-undecaprenyl diphosphate + H2O = di-trans,octa-cis-undecaprenyl phosphate + phosphate + H(+). Catalyzes the dephosphorylation of undecaprenyl diphosphate (UPP). Confers resistance to bacitracin. The polypeptide is Undecaprenyl-diphosphatase (Bordetella bronchiseptica (strain ATCC BAA-588 / NCTC 13252 / RB50) (Alcaligenes bronchisepticus)).